The chain runs to 269 residues: Energy-coupling factor transporter ATP-binding protein EcfA1 (269 aa).

Positions 8 to 242 (IVFKNVSFQY…AEGLTTIGLD (235 aa)) constitute an ABC transporter domain. 42–49 (GHNGSGKS) is an ATP binding site.

The protein belongs to the ABC transporter superfamily. Energy-coupling factor EcfA family. Forms a stable energy-coupling factor (ECF) transporter complex composed of 2 membrane-embedded substrate-binding proteins (S component), 2 ATP-binding proteins (A component) and 2 transmembrane proteins (T component).

The protein localises to the cell membrane. Functionally, ATP-binding (A) component of a common energy-coupling factor (ECF) ABC-transporter complex. Unlike classic ABC transporters this ECF transporter provides the energy necessary to transport a number of different substrates. The protein is Energy-coupling factor transporter ATP-binding protein EcfA1 of Staphylococcus aureus (strain bovine RF122 / ET3-1).